Consider the following 78-residue polypeptide: Beta-defensin 105A (78 aa).

The signal sequence occupies residues 1 to 27 (MALIRKTFYFLFAVFFILVQLPSGCQA). 3 cysteine pairs are disulfide-bonded: Cys46/Cys74, Cys53/Cys67, and Cys57/Cys73.

This sequence belongs to the beta-defensin family.

The protein localises to the secreted. Has antimicrobial activity. This chain is Beta-defensin 105A (DEFB105A), found in Hylobates lar (Lar gibbon).